The chain runs to 440 residues: Methylenetetrahydrofolate--tRNA-(uracil-5-)-methyltransferase TrmFO (440 aa).

An FAD-binding site is contributed by 14–19 (GAGLAG).

The protein belongs to the MnmG family. TrmFO subfamily. It depends on FAD as a cofactor.

The protein localises to the cytoplasm. The enzyme catalyses uridine(54) in tRNA + (6R)-5,10-methylene-5,6,7,8-tetrahydrofolate + NADH + H(+) = 5-methyluridine(54) in tRNA + (6S)-5,6,7,8-tetrahydrofolate + NAD(+). The catalysed reaction is uridine(54) in tRNA + (6R)-5,10-methylene-5,6,7,8-tetrahydrofolate + NADPH + H(+) = 5-methyluridine(54) in tRNA + (6S)-5,6,7,8-tetrahydrofolate + NADP(+). Catalyzes the folate-dependent formation of 5-methyl-uridine at position 54 (M-5-U54) in all tRNAs. This chain is Methylenetetrahydrofolate--tRNA-(uracil-5-)-methyltransferase TrmFO, found in Bdellovibrio bacteriovorus (strain ATCC 15356 / DSM 50701 / NCIMB 9529 / HD100).